A 325-amino-acid chain; its full sequence is Hydroxymethylglutaryl-CoA lyase, mitochondrial (325 aa).

The transit peptide at Met-1–Gly-27 directs the protein to the mitochondrion. The Pyruvate carboxyltransferase domain maps to Val-33–Leu-300. Arg-41 serves as a coordination point for substrate. Asp-42 contributes to the a divalent metal cation binding site. Position 48 is an N6-acetyllysine; alternate (Lys-48). At Lys-48 the chain carries N6-succinyllysine; alternate. An N6-acetyllysine modification is found at Lys-111. Lys-137 and Lys-179 each carry N6-acetyllysine; alternate. N6-succinyllysine; alternate is present on residues Lys-137 and Lys-179. His-233 and His-235 together coordinate a divalent metal cation. The active site involves Cys-266. Position 275 (Asn-275) interacts with a divalent metal cation. The Microbody targeting signal motif lies at Cys-323–Leu-325. Lys-324 carries the post-translational modification N6-acetyllysine.

This sequence belongs to the HMG-CoA lyase family. Homodimer; disulfide-linked. Can also form homotetramers. In suckling rat, highest levels in liver and in intestine. Lower levels in heart, kidney and cerebellum. Weak expression in brain cortex, medulla and midbrain. Levels decrease slightly during weaning.

The protein localises to the mitochondrion matrix. It is found in the peroxisome. It catalyses the reaction (3S)-3-hydroxy-3-methylglutaryl-CoA = acetoacetate + acetyl-CoA. Its pathway is metabolic intermediate metabolism; (S)-3-hydroxy-3-methylglutaryl-CoA degradation; acetoacetate from (S)-3-hydroxy-3-methylglutaryl-CoA: step 1/1. Functionally, mitochondrial 3-hydroxy-3-methylglutaryl-CoA lyase that catalyzes a cation-dependent cleavage of (S)-3-hydroxy-3-methylglutaryl-CoA into acetyl-CoA and acetoacetate, a key step in ketogenesis. Terminal step in leucine catabolism. Ketone bodies (beta-hydroxybutyrate, acetoacetate and acetone) are essential as an alternative source of energy to glucose, as lipid precursors and as regulators of metabolism. The chain is Hydroxymethylglutaryl-CoA lyase, mitochondrial (Hmgcl) from Rattus norvegicus (Rat).